A 288-amino-acid chain; its full sequence is Acetyl-coenzyme A carboxylase carboxyl transferase subunit beta (288 aa).

Residues 32–288 (LFAKCPACKH…LELHTEVENV (257 aa)) enclose the CoA carboxyltransferase N-terminal domain. Positions 36, 39, 54, and 57 each coordinate Zn(2+). Residues 36–57 (CPACKHTIYQKDLGKNKVCPNC) form a C4-type zinc finger.

This sequence belongs to the AccD/PCCB family. Acetyl-CoA carboxylase is a heterohexamer composed of biotin carboxyl carrier protein (AccB), biotin carboxylase (AccC) and two subunits each of ACCase subunit alpha (AccA) and ACCase subunit beta (AccD). Requires Zn(2+) as cofactor.

The protein resides in the cytoplasm. It catalyses the reaction N(6)-carboxybiotinyl-L-lysyl-[protein] + acetyl-CoA = N(6)-biotinyl-L-lysyl-[protein] + malonyl-CoA. It functions in the pathway lipid metabolism; malonyl-CoA biosynthesis; malonyl-CoA from acetyl-CoA: step 1/1. Functionally, component of the acetyl coenzyme A carboxylase (ACC) complex. Biotin carboxylase (BC) catalyzes the carboxylation of biotin on its carrier protein (BCCP) and then the CO(2) group is transferred by the transcarboxylase to acetyl-CoA to form malonyl-CoA. This is Acetyl-coenzyme A carboxylase carboxyl transferase subunit beta from Lactococcus lactis subsp. lactis (strain IL1403) (Streptococcus lactis).